Consider the following 552-residue polypeptide: MEQMKPCAANSPPLTPIGFLERAATVYGDCTSIVYGSNTVYTWRETNLRCLRVASSLSSIGIGRSDVVSVLSPNTPAMYELQFAVPMSGAILNNINTRLDARTVSVLLRHCGSKLLFVDVFSVDLAVEAISMMTTDPPILVFIADKEEEGGDADVADRTKFSYTYDDLIHRGDLDFKWIRPESEWDPVVLNYTSGTTSAPKGVVHCHRGIFVMSIDSLIDWTVPKNPVYLWTLPIFHANGWSYPWGIAAVGGTNVCLRKFDAPLIYRLIRDHGVTHMCGAPVVLNMLSATNEFQPLNRPVNILTAGAPPPAAVLLRAESIGFVISHGYGLTETAGLNVSCAWKPQWNRLPASDRARLKARQGVRTVGFTEIDVVDPESGRSVERNGETVGEIVMRGSSIMLGYLKDPVGTEKALKNGWFYTGDVGVIHSDGYLEIKDRSKDIIITGGENVSSVEVETVLYTNPAVNEVAVVARPDVFWGETPCAFVSLKSGLTQRPTEVEMIEYCRKKMPKYMVPKTVSFVDELPKTSTGKVMKFVLREIAKKMGTTRLSRM.

The Microbody targeting signal signature appears at 550–552 (SRM).

It belongs to the ATP-dependent AMP-binding enzyme family. In terms of tissue distribution, expressed in roots, stems and developing seeds.

The protein localises to the peroxisome. In terms of biological role, may act as an acid--thiol ligase that activates carboxylic acids by forming acyl-CoAs. The protein is Probable acyl-activating enzyme 5, peroxisomal (AAE5) of Arabidopsis thaliana (Mouse-ear cress).